A 185-amino-acid chain; its full sequence is Elongation factor P (185 aa).

It belongs to the elongation factor P family.

The protein resides in the cytoplasm. It participates in protein biosynthesis; polypeptide chain elongation. Its function is as follows. Involved in peptide bond synthesis. Stimulates efficient translation and peptide-bond synthesis on native or reconstituted 70S ribosomes in vitro. Probably functions indirectly by altering the affinity of the ribosome for aminoacyl-tRNA, thus increasing their reactivity as acceptors for peptidyl transferase. In Desulfovibrio desulfuricans (strain ATCC 27774 / DSM 6949 / MB), this protein is Elongation factor P.